The sequence spans 339 residues: Phenylalanine--tRNA ligase alpha subunit (339 aa).

Glu247 is a binding site for Mg(2+).

This sequence belongs to the class-II aminoacyl-tRNA synthetase family. Phe-tRNA synthetase alpha subunit type 1 subfamily. As to quaternary structure, tetramer of two alpha and two beta subunits. Mg(2+) is required as a cofactor.

The protein localises to the cytoplasm. The enzyme catalyses tRNA(Phe) + L-phenylalanine + ATP = L-phenylalanyl-tRNA(Phe) + AMP + diphosphate + H(+). The protein is Phenylalanine--tRNA ligase alpha subunit (pheS) of Deinococcus radiodurans (strain ATCC 13939 / DSM 20539 / JCM 16871 / CCUG 27074 / LMG 4051 / NBRC 15346 / NCIMB 9279 / VKM B-1422 / R1).